A 120-amino-acid polypeptide reads, in one-letter code: NAD(P)H-quinone oxidoreductase subunit 3, chloroplastic (120 aa).

A run of 3 helical transmembrane segments spans residues 9–29 (IFWAFLIISSAIPVLAFLISG), 64–84 (MFALVFVVFDVETVFLYPWAM), and 88–108 (VLGVSAFIEALIFVLILILGL).

The protein belongs to the complex I subunit 3 family. NDH is composed of at least 16 different subunits, 5 of which are encoded in the nucleus.

The protein resides in the plastid. It is found in the chloroplast thylakoid membrane. The catalysed reaction is a plastoquinone + NADH + (n+1) H(+)(in) = a plastoquinol + NAD(+) + n H(+)(out). The enzyme catalyses a plastoquinone + NADPH + (n+1) H(+)(in) = a plastoquinol + NADP(+) + n H(+)(out). NDH shuttles electrons from NAD(P)H:plastoquinone, via FMN and iron-sulfur (Fe-S) centers, to quinones in the photosynthetic chain and possibly in a chloroplast respiratory chain. The immediate electron acceptor for the enzyme in this species is believed to be plastoquinone. Couples the redox reaction to proton translocation, and thus conserves the redox energy in a proton gradient. The polypeptide is NAD(P)H-quinone oxidoreductase subunit 3, chloroplastic (Olimarabidopsis pumila (Dwarf rocket)).